The chain runs to 1335 residues: Bifunctional autolysin (1335 aa).

An N-terminal signal peptide occupies residues 1–29 (MAKKFNYKLPSMVALTLFGTAFTAHQANA). 3 disordered regions span residues 51–88 (QAEK…QSTT), 100–262 (NEIS…KYKE), and 514–535 (WGTT…NNKL). Composition is skewed to polar residues over residues 58–88 (EVTQ…QSTT), 100–127 (NEIS…VTKN), 143–155 (TDTN…QSVA), 176–223 (TASQ…NASG), and 244–258 (SLNN…TTSY). Residues 303 to 863 (VSSQKTSSLP…LSTQSTPAPK (561 aa)) are N-acetylmuramoyl-L-alanine amidase. Over residues 515–531 (GTTSTKPSQPSKPSGGT) the composition is skewed to low complexity. GW domains lie at 533–610 (NKLT…YNTA), 612–686 (APVK…TASK), 700–774 (TVTN…YNTA), 776–850 (SPVK…APSK), 868–943 (STQT…TQNI), 945–1020 (KQTQ…QNST), and 1023–1096 (QSTP…KEKI). Residues 864–1335 (QVKPSTQTVN…GKYFEIPTYK (472 aa)) are endo-beta-N-acetylglucosaminidase.

The protein in the N-terminal section; belongs to the N-acetylmuramoyl-L-alanine amidase 2 family. This sequence in the C-terminal section; belongs to the glycosyl hydrolase 73 family. As to quaternary structure, oligomer; forms a ring structure at the cell surface which is important for efficient partitioning of daughter cells after cell division. In terms of processing, undergoes proteolytic processing to generate the two extracellular lytic enzymes, probably at the septal region on the cell surface.

It is found in the secreted. It catalyses the reaction Hydrolyzes the link between N-acetylmuramoyl residues and L-amino acid residues in certain cell-wall glycopeptides.. The enzyme catalyses an N(4)-(oligosaccharide-(1-&gt;3)-[oligosaccharide-(1-&gt;6)]-beta-D-Man-(1-&gt;4)-beta-D-GlcNAc-(1-&gt;4)-alpha-D-GlcNAc)-L-asparaginyl-[protein] + H2O = an oligosaccharide-(1-&gt;3)-[oligosaccharide-(1-&gt;6)]-beta-D-Man-(1-&gt;4)-D-GlcNAc + N(4)-(N-acetyl-beta-D-glucosaminyl)-L-asparaginyl-[protein]. Endohydrolysis of the di-N-acetylchitobiosyl unit in high-mannose glycopeptides and glycoproteins containing the -[(Man)5(GlcNAc)2]-Asn structure. One N-acetyl-D-glucosamine residue remains attached to the protein; the rest of the oligosaccharide is released intact. Cleaves the peptidoglycan connecting the daughter cells at the end of the cell division cycle, resulting in the separation of the two newly divided cells. Acts as an autolysin in penicillin-induced lysis. As a bacterial surface-associated protein, mediates attachment to polystyrene surfaces, contributing to biofilm formation. Also has vitronectin-binding activity. This Staphylococcus epidermidis protein is Bifunctional autolysin (atl).